The sequence spans 390 residues: Protein YghO (390 aa).

In Escherichia coli (strain K12), this protein is Protein YghO (yghO).